The chain runs to 366 residues: Ribosomal RNA large subunit methyltransferase M (366 aa).

Residues Ser188, 221–224, Asp240, Asp260, and Asp277 contribute to the S-adenosyl-L-methionine site; that span reads CPGG. Catalysis depends on Lys306, which acts as the Proton acceptor.

Belongs to the class I-like SAM-binding methyltransferase superfamily. RNA methyltransferase RlmE family. RlmM subfamily. In terms of assembly, monomer.

It localises to the cytoplasm. The catalysed reaction is cytidine(2498) in 23S rRNA + S-adenosyl-L-methionine = 2'-O-methylcytidine(2498) in 23S rRNA + S-adenosyl-L-homocysteine + H(+). In terms of biological role, catalyzes the 2'-O-methylation at nucleotide C2498 in 23S rRNA. The sequence is that of Ribosomal RNA large subunit methyltransferase M from Salmonella paratyphi C (strain RKS4594).